We begin with the raw amino-acid sequence, 427 residues long: MAKINELLRESTTTNSNSIGRPNLVALTRATTKLIYSDIVATQRTNQPVAAFYGIKYLNPDNEFTFKTGATYAGEAGYVDREQITELTEESKLTLNKGDLFKYNNIVYKVLEDTPFADIEESDLELALQIAIVLLKVRLFSDAASTSKFESSDSEIADARFQINKWQTAVKSRKLKTGITVELAQDLEANGFDAPNFLEDLLATEMADEINKDILQSLITVSKRYKVTGITDTGFIDLSYASAPEAGRSLYRMVCEMVSHIQKESTYTATFCVASARAAAILAASGWLKHKPEDDKYLSQNAYGFLANGLPLYCDTNSPLDYVIVGVVENIGEKEIVGSIFYAPYTEGLDLDDPEHVGAFKVVVDPESLQPSIGLLVRYALSANPYTVAKDEKEARVIDGGDMDKMAGRSDLSVLLGVKLPKIIIDE.

This sequence belongs to the Tevenvirinae capsid vertex family. As to quaternary structure, homopentamer. Interacts with the portal protein. Interacts with the major capsid protein that forms hexamers. In terms of processing, proteolytic cleavage at the N-terminus by the prohead core protein protease gives rise to the mature capsid vertex protein.

It localises to the virion. In terms of biological role, capsid protein that self-associates to form pentons, building the capsid in association with hexamers of the major capsid protein and one dodecamer of the portal protein. The capsid vertex protein self-associates to form 11 pentons, building the T=13 laevo capsid in association with 160 hexamers of the major capsid protein. This Escherichia coli O157:H7 (Bacteriophage AR1) protein is Capsid vertex protein.